The chain runs to 77 residues: UPF0291 protein EAT1b_0405 (77 aa).

The interval 53 to 77 (KVVDPDGNDVTPEKLKEDQKRYRGE) is disordered. The segment covering 63–77 (TPEKLKEDQKRYRGE) has biased composition (basic and acidic residues).

Belongs to the UPF0291 family.

The protein localises to the cytoplasm. The chain is UPF0291 protein EAT1b_0405 from Exiguobacterium sp. (strain ATCC BAA-1283 / AT1b).